The sequence spans 261 residues: Matrix metalloproteinase-26 (261 aa).

Residues 1–17 (MQLVILRVTIFLPWCFA) form the signal peptide. Positions 18–89 (VPVPPAADHK…PHCGVPDGSD (72 aa)) are excised as a propeptide. N-linked (GlcNAc...) asparagine glycosylation occurs at Asn64. The Cysteine switch motif lies at 80–87 (PHCGVPDG). Zn(2+) contacts are provided by Cys82 and His208. The active site involves Glu209. Residues His212 and His218 each coordinate Zn(2+). N-linked (GlcNAc...) asparagine glycosylation occurs at Asn221.

This sequence belongs to the peptidase M10A family. Zn(2+) is required as a cofactor. It depends on Ca(2+) as a cofactor. As to expression, expressed specifically in uterus and placenta. Is also widely expressed in malignant tumors from different sources as well as in diverse tumor cell lines.

The protein resides in the secreted. It localises to the extracellular space. The protein localises to the extracellular matrix. Functionally, may hydrolyze collagen type IV, fibronectin, fibrinogen, beta-casein, type I gelatin and alpha-1 proteinase inhibitor. Is also able to activate progelatinase B. In Homo sapiens (Human), this protein is Matrix metalloproteinase-26 (MMP26).